The chain runs to 236 residues: Protein YIPF6 (236 aa).

N-acetylalanine is present on Ala2. Residues 2 to 84 are Cytoplasmic-facing; it reads AEAEDSPGEQ…HVLYPRKSNA (83 aa). Position 7 is a phosphoserine (Ser7). A helical transmembrane segment spans residues 85-105; that stretch reads LLRDWDLWGPLILCVTLALML. Over 106–116 the chain is Lumenal; the sequence is QKSSIDGKNDG. Residues 117–137 traverse the membrane as a helical segment; it reads GGPEFAEVFVIIWFGAVTITL. Topologically, residues 138–147 are cytoplasmic; sequence NSKLLGGNIS. The helical transmembrane segment at 148 to 168 threads the bilayer; that stretch reads FFQSLCVLGYCILPLNIAMLI. Residues 169 to 185 lie on the Lumenal side of the membrane; sequence CRLLLLAGQGPINFMIR. A helical transmembrane segment spans residues 186–206; it reads LFVVLLMFAWSVVASTAFLAD. The Cytoplasmic segment spans residues 207 to 213; the sequence is SQPPNRK. A helical membrane pass occupies residues 214 to 234; it reads ALAVYPVFLFYFVISWMILTF. Residues 235–236 lie on the Lumenal side of the membrane; that stretch reads TP.

It belongs to the YIP1 family. Predominantly interacts with YIPF1 or YIPF2, but may also form a ternary complex with YIPF1 and YIPF2. This interaction may stabilize YIPF1 and YIPF2.

Its subcellular location is the golgi apparatus membrane. In terms of biological role, may be required for stable YIPF1 and YIPF2 protein expression. This chain is Protein YIPF6 (Yipf6), found in Mus musculus (Mouse).